Consider the following 156-residue polypeptide: MMKTVTIDLQIASEDQSNLPTLEQFTLWATNAVRAEHFEPEITIRIVDEAESHELNFTYRGKDRPTNVLSFPFECPEEVELPLLGDLVICRQVVEREAQEQGKPLTAHWAHMVVHGSLHLLGYDHIEDDEAVEMESLETEIMTGLGFEDPYSYDEE.

Residues histidine 115, histidine 119, and histidine 125 each coordinate Zn(2+).

The protein belongs to the endoribonuclease YbeY family. The cofactor is Zn(2+).

The protein resides in the cytoplasm. Functionally, single strand-specific metallo-endoribonuclease involved in late-stage 70S ribosome quality control and in maturation of the 3' terminus of the 16S rRNA. This chain is Endoribonuclease YbeY, found in Mannheimia succiniciproducens (strain KCTC 0769BP / MBEL55E).